A 402-amino-acid polypeptide reads, in one-letter code: Argininosuccinate synthase (402 aa).

9–17 is a binding site for ATP; it reads AYSGGLDTS. Residue Tyr-87 coordinates L-citrulline. An ATP-binding site is contributed by Gly-117. L-aspartate is bound by residues Thr-119, Asn-123, and Asp-124. Asn-123 contributes to the L-citrulline binding site. The L-citrulline site is built by Arg-127, Ser-176, Ser-185, Glu-261, and Tyr-273.

Belongs to the argininosuccinate synthase family. Type 1 subfamily. Homotetramer.

The protein resides in the cytoplasm. The catalysed reaction is L-citrulline + L-aspartate + ATP = 2-(N(omega)-L-arginino)succinate + AMP + diphosphate + H(+). The protein operates within amino-acid biosynthesis; L-arginine biosynthesis; L-arginine from L-ornithine and carbamoyl phosphate: step 2/3. This is Argininosuccinate synthase from Chlorobium phaeobacteroides (strain BS1).